Reading from the N-terminus, the 329-residue chain is MAP kinase-activated protein kinase 2 (329 aa).

ATP-binding positions include 1–7 (LGINGKV) and K22. One can recognise a Protein kinase domain in the interval 1–254 (LGINGKVLRI…ITEFMNHPWI (254 aa)). Staurosporine is bound at residue 68–70 (ECL). The active-site Proton acceptor is the D115. T151 is subject to Phosphothreonine; by MAPK14. The residue at position 201 (S201) is a Phosphoserine; by MAPK14. A Phosphoserine; by autocatalysis modification is found at S257. The interval 257–293 (STKVPQTPLHTSRVLKEDKERWEDVKEEMTSALATMR) is autoinhibitory helix. T263 is modified (phosphothreonine; by MAPK14). Residue K282 forms a Glycyl lysine isopeptide (Lys-Gly) (interchain with G-Cter in SUMO) linkage. The short motif at 285–294 (MTSALATMRV) is the Nuclear export signal (NES) element. Residues 295–319 (DYEQIKIKKIEDASNPLLLKRRKKA) are p38 MAPK-binding site. 2 consecutive short sequence motifs (bipartite nuclear localization signal) follow at residues 300 to 303 (KIKK) and 314 to 318 (KRRKK).

The protein belongs to the protein kinase superfamily. CAMK Ser/Thr protein kinase family. In terms of assembly, heterodimer with p38-alpha/MAPK14; this heterodimer forms a stable complex: molecules are positioned 'face to face' so that the ATP-binding sites of both kinases are at the heterodimer interface. Interacts with PHC2. Interacts with HSF1. Post-translationally, sumoylation inhibits the protein kinase activity. In terms of processing, phosphorylated and activated by MAP kinase p38-alpha/MAPK14 at Thr-151, Ser-201 and Thr-263.

The protein resides in the cytoplasm. It localises to the nucleus. It carries out the reaction L-seryl-[protein] + ATP = O-phospho-L-seryl-[protein] + ADP + H(+). It catalyses the reaction L-threonyl-[protein] + ATP = O-phospho-L-threonyl-[protein] + ADP + H(+). Activated following phosphorylation by p38-alpha/MAPK14 following various stresses. Inhibited following sumoylation. Specifically inhibited by pyrrolopyridine inhibitors. In terms of biological role, stress-activated serine/threonine-protein kinase involved in cytokine production, endocytosis, reorganization of the cytoskeleton, cell migration, cell cycle control, chromatin remodeling, DNA damage response and transcriptional regulation. Following stress, it is phosphorylated and activated by MAP kinase p38-alpha/MAPK14, leading to phosphorylation of substrates. Phosphorylates serine in the peptide sequence, Hyd-X-R-X(2)-S, where Hyd is a large hydrophobic residue. Phosphorylates ALOX5, CDC25B, CDC25C, CEP131, ELAVL1, HNRNPA0, HSP27/HSPB1, KRT18, KRT20, LIMK1, LSP1, PABPC1, PARN, PDE4A, RCSD1, RPS6KA3, TAB3 and TTP/ZFP36. Phosphorylates HSF1; leading to the interaction with HSP90 proteins and inhibiting HSF1 homotrimerization, DNA-binding and transactivation activities. Mediates phosphorylation of HSP27/HSPB1 in response to stress, leading to the dissociation of HSP27/HSPB1 from large small heat-shock protein (sHsps) oligomers and impairment of their chaperone activities and ability to protect against oxidative stress effectively. Involved in inflammatory response by regulating tumor necrosis factor (TNF) and IL6 production post-transcriptionally: acts by phosphorylating AU-rich elements (AREs)-binding proteins ELAVL1, HNRNPA0, PABPC1 and TTP/ZFP36, leading to regulation of the stability and translation of TNF and IL6 mRNAs. Phosphorylation of TTP/ZFP36, a major post-transcriptional regulator of TNF, promotes its binding to 14-3-3 proteins and reduces its ARE mRNA affinity, leading to inhibition of dependent degradation of ARE-containing transcripts. Phosphorylates CEP131 in response to cellular stress following ultraviolet irradiation which promotes binding of CEP131 to 14-3-3 proteins and inhibits formation of novel centriolar satellites. Also involved in late G2/M checkpoint following DNA damage through a process of post-transcriptional mRNA stabilization: following DNA damage, relocalizes from nucleus to cytoplasm and phosphorylates HNRNPA0 and PARN, leading to stabilization of GADD45A mRNA. Involved in toll-like receptor signaling pathway (TLR) in dendritic cells: required for acute TLR-induced macropinocytosis by phosphorylating and activating RPS6KA3. The polypeptide is MAP kinase-activated protein kinase 2 (MAPKAPK2) (Cricetulus longicaudatus (Long-tailed dwarf hamster)).